Reading from the N-terminus, the 792-residue chain is Serine/threonine-protein kinase Nek4 (792 aa).

One can recognise a Protein kinase domain in the interval 6 to 261; it reads YCYMRVVGRG…VRSILRQPYI (256 aa). Residues 12-20 and lysine 35 each bind ATP; that span reads VGRGSYGEV. Aspartate 131 acts as the Proton acceptor in catalysis. Threonine 165 is subject to Phosphothreonine; by autocatalysis. 4 disordered regions span residues 329 to 358, 379 to 515, 527 to 611, and 628 to 657; these read QEKP…NTGE, ANAG…LPSY, QQND…SITQ, and LSED…TNEM. 2 positions are modified to phosphoserine: serine 340 and serine 343. Polar residues-rich tracts occupy residues 412–421, 456–467, 473–484, 496–505, and 541–551; these read QGNTKSSDQP, DQVTGIIENQDS, QPHSSMSEPSLS, AHSGTKSQFQ, and VNSSRTSSTAS. N6-methyllysine is present on lysine 566. The segment covering 602–611 has biased composition (polar residues); sequence RFSSDCSITQ. Over residues 641 to 657 the composition is skewed to basic and acidic residues; sequence DKSDGDSREGKSHTNEM. Residue serine 675 is modified to Phosphoserine.

The protein belongs to the protein kinase superfamily. NEK Ser/Thr protein kinase family. NIMA subfamily. It depends on Mn(2+) as a cofactor. As to expression, expressed ubiquitously among various organs and is up-regulated in the testis.

It localises to the cytoplasm. Its subcellular location is the cell projection. The protein resides in the cilium. It catalyses the reaction L-seryl-[protein] + ATP = O-phospho-L-seryl-[protein] + ADP + H(+). The catalysed reaction is L-threonyl-[protein] + ATP = O-phospho-L-threonyl-[protein] + ADP + H(+). Functionally, required for normal entry into proliferative arrest after a limited number of cell divisions, also called replicative senescence. Required for normal cell cycle arrest in response to double-stranded DNA damage. Protein kinase that seems to act exclusively upon threonine residues. The polypeptide is Serine/threonine-protein kinase Nek4 (Nek4) (Mus musculus (Mouse)).